The following is a 184-amino-acid chain: Probable chemoreceptor glutamine deamidase CheD (184 aa).

Belongs to the CheD family.

The enzyme catalyses L-glutaminyl-[protein] + H2O = L-glutamyl-[protein] + NH4(+). Its function is as follows. Probably deamidates glutamine residues to glutamate on methyl-accepting chemotaxis receptors (MCPs), playing an important role in chemotaxis. In Rhizobium leguminosarum bv. trifolii (strain WSM2304), this protein is Probable chemoreceptor glutamine deamidase CheD.